The following is a 119-amino-acid chain: Holo-[acyl-carrier-protein] synthase (119 aa).

Mg(2+) contacts are provided by aspartate 8 and glutamate 50.

Belongs to the P-Pant transferase superfamily. AcpS family. The cofactor is Mg(2+).

It localises to the cytoplasm. The enzyme catalyses apo-[ACP] + CoA = holo-[ACP] + adenosine 3',5'-bisphosphate + H(+). Its function is as follows. Transfers the 4'-phosphopantetheine moiety from coenzyme A to a Ser of acyl-carrier-protein. In Clavibacter michiganensis subsp. michiganensis (strain NCPPB 382), this protein is Holo-[acyl-carrier-protein] synthase.